Reading from the N-terminus, the 133-residue chain is Large ribosomal subunit protein uL15 (133 aa).

The interval 1–60 is disordered; it reads MALENLKPAQGSTKDRKRVGRGQGSGMGKTSTRGGKGQTARTGYKAKRGFEGGQQPLQRR.

The protein belongs to the universal ribosomal protein uL15 family. Part of the 50S ribosomal subunit.

Functionally, binds to the 23S rRNA. The chain is Large ribosomal subunit protein uL15 from Wolinella succinogenes (strain ATCC 29543 / DSM 1740 / CCUG 13145 / JCM 31913 / LMG 7466 / NCTC 11488 / FDC 602W) (Vibrio succinogenes).